We begin with the raw amino-acid sequence, 144 residues long: Putative pre-16S rRNA nuclease (144 aa).

This sequence belongs to the YqgF nuclease family.

The protein resides in the cytoplasm. Could be a nuclease involved in processing of the 5'-end of pre-16S rRNA. The chain is Putative pre-16S rRNA nuclease from Acaryochloris marina (strain MBIC 11017).